The following is a 208-amino-acid chain: Small ribosomal subunit protein uS5 (208 aa).

Over residues 1 to 21 (MSDREQRDGGRSAENNNDRKG) the composition is skewed to basic and acidic residues. Residues 1-38 (MSDREQRDGGRSAENNNDRKGRNNGRRNDRRNHQDNER) are disordered. Residues 41–104 (YIERVVTINR…EEARKNFFRV (64 aa)) enclose the S5 DRBM domain.

Belongs to the universal ribosomal protein uS5 family. In terms of assembly, part of the 30S ribosomal subunit. Contacts proteins S4 and S8.

In terms of biological role, with S4 and S12 plays an important role in translational accuracy. Located at the back of the 30S subunit body where it stabilizes the conformation of the head with respect to the body. The sequence is that of Small ribosomal subunit protein uS5 from Corynebacterium aurimucosum (strain ATCC 700975 / DSM 44827 / CIP 107346 / CN-1) (Corynebacterium nigricans).